The sequence spans 135 residues: ATP synthase epsilon chain (135 aa).

A compositionally biased stretch (basic and acidic residues) spans 89-100; it reads SGKAEAELEKAK. Positions 89–114 are disordered; that stretch reads SGKAEAELEKAKNQLSQNKDQGNSPE. The segment covering 101 to 112 has biased composition (polar residues); the sequence is NQLSQNKDQGNS.

It belongs to the ATPase epsilon chain family. As to quaternary structure, F-type ATPases have 2 components, CF(1) - the catalytic core - and CF(0) - the membrane proton channel. CF(1) has five subunits: alpha(3), beta(3), gamma(1), delta(1), epsilon(1). CF(0) has three main subunits: a, b and c.

The protein localises to the cellular thylakoid membrane. In terms of biological role, produces ATP from ADP in the presence of a proton gradient across the membrane. This Prochlorococcus marinus (strain NATL2A) protein is ATP synthase epsilon chain.